The primary structure comprises 260 residues: CD320 antigen (260 aa).

Residues Met1–Ala28 form the signal peptide. The Extracellular segment spans residues Ala29–Gly208. The 38-residue stretch at Ser46–Arg83 folds into the LDL-receptor class A 1 domain. Disulfide bonds link Cys47-Cys60, Cys54-Cys73, and Cys67-Cys82. Ca(2+) contacts are provided by Trp65, Asp68, Asp70, Asp72, Asp78, and Glu79. A glycan (N-linked (GlcNAc...) asparagine) is linked at Asn118. The LDL-receptor class A 2 domain occupies Pro123–Asp160. Intrachain disulfides connect Cys124–Cys137, Cys131–Cys150, and Cys144–Cys159. Positions 142, 145, 147, 149, 155, and 156 each coordinate Ca(2+). N-linked (GlcNAc...) asparagine glycosylation occurs at Asn185. The chain crosses the membrane as a helical span at residues Val209 to Leu229. Over Arg230–Ile260 the chain is Cytoplasmic.

As to quaternary structure, interacts (via LDL-receptor class A domains) with TCN2.

It localises to the cell membrane. In terms of biological role, receptor for transcobalamin saturated with cobalamin (TCbl). Plays an important role in cobalamin uptake. Plasma membrane protein that is expressed on follicular dendritic cells (FDC) and mediates interaction with germinal center B cells. Functions as a costimulator to promote B cell responses to antigenic stimuli; promotes B cell differentiation and proliferation. Germinal center-B (GC-B) cells differentiate into memory B-cells and plasma cells (PC) through interaction with T-cells and follicular dendritic cells (FDC). CD320 augments the proliferation of PC precursors generated by IL-10. The protein is CD320 antigen (Cd320) of Mus musculus (Mouse).